Here is a 364-residue protein sequence, read N- to C-terminus: Mannose-1-phosphate guanylyltransferase catalytic subunit beta (364 aa).

The interval 2-220 (KALILVGGYG…PGFWMDVGQP (219 aa)) is substrate-binding domain. Asp109 contacts GDP-alpha-D-mannose. Asp109 contributes to the Mg(2+) binding site. Lys160 is a catalytic residue. Position 216 (Asp216) interacts with GDP-alpha-D-mannose. Asp216 contributes to the Mg(2+) binding site. A hexapeptide repeat domain region spans residues 243–364 (ATGSNIHGTA…VNVPSKDIIM (122 aa)).

Belongs to the transferase hexapeptide repeat family. As to quaternary structure, component of the GMPPA-GMPPB mannose-1-phosphate guanylyltransferase complex composed of 4 GMPPA subunits and 8 tag-335/GMPPB subunits; the complex is organized into three layers, a central layer made up of 2 GMPPA dimers sandwiched between two layers each made up of 2 tag-335/GMPPB dimers. Catalytic activity of tag-335/GMPPB is reduced when part of the complex and binding of GDP-alpha-D-Mannose by GMPPA induces allosteric feedback inhibition of tag-335/GMPPB. Requires Mg(2+) as cofactor.

The catalysed reaction is alpha-D-mannose 1-phosphate + GTP + H(+) = GDP-alpha-D-mannose + diphosphate. It functions in the pathway nucleotide-sugar biosynthesis; GDP-alpha-D-mannose biosynthesis; GDP-alpha-D-mannose from alpha-D-mannose 1-phosphate (GTP route): step 1/1. Its activity is regulated as follows. Enzyme activity is reduced by incorporation into the GMPPA-GMPPB mannose-1-phosphate guanylyltransferase complex. Allosterically inhibited, when part of the GMPPA-GMPPB complex, by GDP-alpha-D-mannose binding to GMPPA. Functionally, catalytic subunit of the GMPPA-GMPPB mannose-1-phosphate guanylyltransferase complex. Catalyzes the formation of GDP-mannose, an essential precursor of glycan moieties of glycoproteins and glycolipids. Can catalyze the reverse reaction in vitro. Together with GMPPA regulates GDP-alpha-D-mannose levels. This Caenorhabditis briggsae protein is Mannose-1-phosphate guanylyltransferase catalytic subunit beta.